Reading from the N-terminus, the 840-residue chain is Leucine-zipper-like transcriptional regulator 1 (840 aa).

A2 carries the N-acetylalanine modification. Kelch repeat units follow at residues 79–128, 130–185, 187–238, 239–285, 295–341, and 399–450; these read AIYV…VYGS, MFVF…VYSD, LWIF…VCRD, KMFV…QRRY, HLYV…PERA, and AMYI…FVLG. BTB domains are found at residues 443-537 and 667-736; these read CDVE…KYPR and CDIT…NMPP.

This sequence belongs to the LZTR1 family. In terms of assembly, homodimer. Component of the BCR(LZTR1) E3 ubiquitin ligase complex, at least composed of CUL3, LZTR1 and RBX1. Interacts with Ras (K-Ras/KRAS, N-Ras/NRAS and H-Ras/HRAS). Interacts with RAF1. Interacts with SHOC2. Interacts with PPP1CB. Post-translationally, phosphorylated on tyrosine upon induction of apoptosis, leading to its degradation by the proteasome.

It is found in the endomembrane system. The protein localises to the recycling endosome. It localises to the golgi apparatus. Its pathway is protein modification; protein ubiquitination. In terms of biological role, substrate-specific adapter of a BCR (BTB-CUL3-RBX1) E3 ubiquitin-protein ligase complex that mediates ubiquitination of Ras (K-Ras/KRAS, N-Ras/NRAS and H-Ras/HRAS). Is a negative regulator of RAS-MAPK signaling that acts by controlling Ras levels and decreasing Ras association with membranes. The chain is Leucine-zipper-like transcriptional regulator 1 from Homo sapiens (Human).